We begin with the raw amino-acid sequence, 319 residues long: MKTIGLLTSGGDAPGMNAAIRAVVRSAIYYGCKVYGINRGYKGLLEEDLTEMNLSSVGDIIHRGGTILKSSRCEEFKTEEGRLKAVKILKKYKIDCLVVIGGDGSFAGAQKLSDLGFPAIGIPGTIDNDLAYTDYTIGFDTAMNTIIDAIGKIRDTSSSHERVNIVEVMGRHCGDLALYAGLAGGAETIIVPEVEITVDEVALRLKTTQKRGKRHSIIVLAEGVGSASDLEKELKKESGADLRVTVLGHVQRGGSPTVSDRILASRLGVRAVELLLDGKSARVVGIKENKIIDLEISEALAQKKVFDKEAYEMAKILSI.

G11 provides a ligand contact to ATP. 21–25 contacts ADP; that stretch reads RAVVR. ATP is bound by residues 72–73 and 102–105; these read RC and GDGS. Position 103 (D103) interacts with Mg(2+). Substrate is bound at residue 125-127; the sequence is TID. The Proton acceptor role is filled by D127. R154 is an ADP binding site. Substrate contacts are provided by residues R162 and 169–171; that span reads MGR. ADP contacts are provided by residues 185–187, R211, and 213–215; these read GAE and KRH. Residues E222, R243, and 249–252 each bind substrate; that span reads HVQR.

The protein belongs to the phosphofructokinase type A (PFKA) family. ATP-dependent PFK group I subfamily. Prokaryotic clade 'B1' sub-subfamily. In terms of assembly, homotetramer. Requires Mg(2+) as cofactor.

Its subcellular location is the cytoplasm. The enzyme catalyses beta-D-fructose 6-phosphate + ATP = beta-D-fructose 1,6-bisphosphate + ADP + H(+). The protein operates within carbohydrate degradation; glycolysis; D-glyceraldehyde 3-phosphate and glycerone phosphate from D-glucose: step 3/4. With respect to regulation, allosterically activated by ADP and other diphosphonucleosides, and allosterically inhibited by phosphoenolpyruvate. Functionally, catalyzes the phosphorylation of D-fructose 6-phosphate to fructose 1,6-bisphosphate by ATP, the first committing step of glycolysis. In Clostridioides difficile (strain 630) (Peptoclostridium difficile), this protein is ATP-dependent 6-phosphofructokinase.